Here is a 110-residue protein sequence, read N- to C-terminus: Transcription factor S (110 aa).

Zn(2+) is bound by residues C4, C7, C22, C25, C71, C74, C99, and C102. The C4-type zinc finger occupies 4–25 (CPKCGNLMLPDRKRKVWVCRSC). The TFIIS-type zinc-finger motif lies at 67-107 (TKITCPKCGNDTAYWWEMQTRAGDEPSTIFYKCTKCGHTWR).

The protein belongs to the archaeal RpoM/eukaryotic RPA12/RPB9/RPC11 RNA polymerase family.

Functionally, induces RNA cleavage activity in the RNA polymerase. In its presence, the cleavage activity of the RNA polymerase truncates the RNA back to position +15 in a stepwise manner by releasing mainly dinucleotides from the 3'-end of the nascent RNA. The truncated RNAs are able to continue elongation. Involved in transcriptional proofreading and fidelity. Misincorporation of nucleotides during elongation of transcription leads to arrested elongation complexes which are rescued by TFS-promoted removal of a dinucleotide from the 3'-end. TFS is able to induce a cleavage resynthesis cycle in stalled elongation complexes (resulting from the next missing nucleotide or a reduced incorporation rate of a wrong nucleotide) preventing misincorporation and enabling proofreading in a post-incorporation manner. Pausing of elongation complexes is the main determinant of TFS-induced RNA cleavage. In Thermococcus celer, this protein is Transcription factor S.